Reading from the N-terminus, the 188-residue chain is MEHLNSLEHHFLIAMPNLTESWFDKTVIYIVEDNEHGTMGLVINLEHNLTVPELLDHFELTVEAPENYADQPVLMGGPVDLEHGFILHEPQGTWQKSLPLRDNLAMTVSEDFLKAMADGTAPEKIVVCLGFSGWEKGQLNDEIQANNWLTIPYNEALLFDVPNDQKWQVALNTLGISPESLSMDAGHD.

Belongs to the UPF0301 (AlgH) family.

In Hydrogenovibrio crunogenus (strain DSM 25203 / XCL-2) (Thiomicrospira crunogena), this protein is UPF0301 protein Tcr_1827.